The primary structure comprises 176 residues: Probable chorismate pyruvate-lyase (176 aa).

Substrate-binding residues include Arg-70, Leu-108, and Glu-166.

It belongs to the UbiC family.

It is found in the cytoplasm. It carries out the reaction chorismate = 4-hydroxybenzoate + pyruvate. It functions in the pathway cofactor biosynthesis; ubiquinone biosynthesis. Removes the pyruvyl group from chorismate, with concomitant aromatization of the ring, to provide 4-hydroxybenzoate (4HB) for the ubiquinone pathway. This Dechloromonas aromatica (strain RCB) protein is Probable chorismate pyruvate-lyase.